A 198-amino-acid chain; its full sequence is 7-methyl-GTP pyrophosphatase (198 aa).

Asp-69 functions as the Proton acceptor in the catalytic mechanism.

This sequence belongs to the Maf family. YceF subfamily. The cofactor is a divalent metal cation.

The protein resides in the cytoplasm. It carries out the reaction N(7)-methyl-GTP + H2O = N(7)-methyl-GMP + diphosphate + H(+). Nucleoside triphosphate pyrophosphatase that hydrolyzes 7-methyl-GTP (m(7)GTP). May have a dual role in cell division arrest and in preventing the incorporation of modified nucleotides into cellular nucleic acids. This chain is 7-methyl-GTP pyrophosphatase, found in Yersinia pestis bv. Antiqua (strain Antiqua).